We begin with the raw amino-acid sequence, 422 residues long: Testin (422 aa).

In terms of domain architecture, PET spans 92–199; the sequence is MILTNPVPAK…GDVKLPSEMD (108 aa). Disordered stretches follow at residues 135–162 and 194–226; these read QPVA…QDPS and LPSE…EDKS. Residues 194-212 show a composition bias toward basic and acidic residues; that stretch reads LPSEMDVKPGDRSSLDGGD. 3 consecutive LIM zinc-binding domains span residues 234 to 297, 299 to 359, and 362 to 422; these read YSCY…CDSE, PRCA…NHAV, and QGCH…MMMS.

Belongs to the prickle / espinas / testin family. As to quaternary structure, interacts via LIM domain 1 with ZYX. Interacts (via LIM domain 3) with ENAH and VASP. Interacts with ALKBH4, talin, actin, alpha-actinin, GRIP1 and PXN. Interacts (via LIM domain 2) with ACTL7A (via N-terminus). Heterodimer with ACTL7A; the heterodimer interacts with ENAH to form a heterotrimer.

It localises to the cytoplasm. It is found in the cell junction. The protein resides in the focal adhesion. Its function is as follows. Scaffold protein that may play a role in cell adhesion, cell spreading and in the reorganization of the actin cytoskeleton. Plays a role in the regulation of cell proliferation. May act as a tumor suppressor. The chain is Testin (TES) from Monodelphis domestica (Gray short-tailed opossum).